A 418-amino-acid polypeptide reads, in one-letter code: Ras association domain-containing protein 5 (418 aa).

Positions 1 to 118 (MAMASPAIGQ…QPQDPRVPAE (118 aa)) are disordered. Ala2 carries the post-translational modification N-acetylthreonine. Residues 77 to 89 (SRPARPLRPGLQQ) are compositionally biased toward low complexity. Residues 122 to 170 (GHCFAELVLPGGPGWCDLCGREVLRQALRCTNCKFTCHPECRSLIQLDC) form a Phorbol-ester/DAG-type zinc finger. Phosphoserine is present on residues Ser182 and Ser279. In terms of domain architecture, Ras-associating spans 274-364 (TDKRTSFYLP…LSFVLKENET (91 aa)). Phosphothreonine is present on Thr352. An SARAH domain is found at 366 to 413 (EVEWDAFSIPELQNFLTILEKEEQDKIQQVQKKYDKFRQKLEEALRES).

In terms of assembly, interacts directly with activated HRAS; a RASSF5-STK4/MST1 complex probably associates with activated HRAS. Interacts with KRAS. Probably interacts with Ras-like GTPases RRAS, MRAS, RAP1B, RAP2A and RALA. Interacts with RRAS2. Can self-associate. Interacts with RSSF1 isoform A. The RSSF1 isoform A-RSSF5 heterodimer probably mediates the association of RSSF1 with HRAS. Isoform 2 interacts with activated RAP1A and ITGAL/LFA-1. Binds STK4/MST1, inhibiting STK4/MST1 autoactivation. In terms of tissue distribution, widely expressed. Frequently down-regulated in lung tumor cell lines and primary lung tumors.

The protein resides in the cytoplasm. Its subcellular location is the cytoskeleton. Its function is as follows. Potential tumor suppressor. Seems to be involved in lymphocyte adhesion by linking RAP1A activation upon T-cell receptor or chemokine stimulation to integrin activation. Isoform 2 stimulates lymphocyte polarization and the patch-like distribution of ITGAL/LFA-1, resulting in an enhanced adhesion to ICAM1. Together with RAP1A may participate in regulation of microtubule growth. The association of isoform 2 with activated RAP1A is required for directional movement of endothelial cells during wound healing. May be involved in regulation of Ras apoptotic function. The RASSF5-STK4/MST1 complex may mediate HRAS and KRAS induced apoptosis. This is Ras association domain-containing protein 5 (RASSF5) from Homo sapiens (Human).